A 457-amino-acid polypeptide reads, in one-letter code: MYLEDTIAAIGTPVGEGGIGIIRVSGPDVPAIARRIVRRVNENGDFVSHRFYYGTVVDPESRDTVDEVMAVLMRAPRSFTREDVLEIQCHGGYLVTRRVLDAVLQCGARPAEPGEFTRRAFLNGRIDLVQAEAVIDVIRSKTEAALNLAQHQREGRLSERLKAVQGCLRHSLALVEAFIDFPDDEVDPASRVEIEAKAREASGRIEELLEGFDEGRVLRDGVSVLIAGKPNVGKSSLLNTLLQEKRAIVTSVPGTTRDIIEEVVNVRGLPLRMLDTAGIRETEDVVEQEGVRLTLEKIPQADLILFVLDGSRPFDDDDRMILAALAERRVIVVTNKSDLPVTLRIPGELEGVHTVAISTATGAGIDDLREAVFETFIHGRAIDSREYVALSQTRHRDALVKARGRIAVFFANLAAGNDLEILAVDLRDALDAVGEVTGETTPDDILELIFQRFCIGK.

Residues Arg23, Glu86, and Arg125 each coordinate (6S)-5-formyl-5,6,7,8-tetrahydrofolate. One can recognise a TrmE-type G domain in the interval 221 to 377 (GVSVLIAGKP…LREAVFETFI (157 aa)). Asn231 is a binding site for K(+). GTP contacts are provided by residues 231-236 (NVGKSS), 250-256 (TSVPGTT), and 275-278 (DTAG). Ser235 provides a ligand contact to Mg(2+). Thr250, Val252, and Thr255 together coordinate K(+). Mg(2+) is bound at residue Thr256. Lys457 contributes to the (6S)-5-formyl-5,6,7,8-tetrahydrofolate binding site.

It belongs to the TRAFAC class TrmE-Era-EngA-EngB-Septin-like GTPase superfamily. TrmE GTPase family. As to quaternary structure, homodimer. Heterotetramer of two MnmE and two MnmG subunits. K(+) is required as a cofactor.

It localises to the cytoplasm. In terms of biological role, exhibits a very high intrinsic GTPase hydrolysis rate. Involved in the addition of a carboxymethylaminomethyl (cmnm) group at the wobble position (U34) of certain tRNAs, forming tRNA-cmnm(5)s(2)U34. The chain is tRNA modification GTPase MnmE from Geobacter metallireducens (strain ATCC 53774 / DSM 7210 / GS-15).